The following is a 135-amino-acid chain: Global transcriptional regulator Spx 2 (135 aa).

The active site involves Cys-10.

This sequence belongs to the ArsC family. Spx subfamily. As to quaternary structure, interacts with the C-terminal domain of the alpha subunit of the RNAP.

Its subcellular location is the cytoplasm. Global transcriptional regulator that plays a key role in stress response and exerts either positive or negative regulation of genes. Acts by interacting with the C-terminal domain of the alpha subunit of the RNA polymerase (RNAP). This interaction can enhance binding of RNAP to the promoter region of target genes and stimulate their transcription, or block interaction of RNAP with activator. The chain is Global transcriptional regulator Spx 2 from Oceanobacillus iheyensis (strain DSM 14371 / CIP 107618 / JCM 11309 / KCTC 3954 / HTE831).